Here is a 701-residue protein sequence, read N- to C-terminus: 1,4-alpha-glucan branching enzyme GlgB (701 aa).

D381 functions as the Nucleophile in the catalytic mechanism. Residue E434 is the Proton donor of the active site.

Belongs to the glycosyl hydrolase 13 family. GlgB subfamily. Monomer.

The catalysed reaction is Transfers a segment of a (1-&gt;4)-alpha-D-glucan chain to a primary hydroxy group in a similar glucan chain.. It participates in glycan biosynthesis; glycogen biosynthesis. Catalyzes the formation of the alpha-1,6-glucosidic linkages in glycogen by scission of a 1,4-alpha-linked oligosaccharide from growing alpha-1,4-glucan chains and the subsequent attachment of the oligosaccharide to the alpha-1,6 position. In Jannaschia sp. (strain CCS1), this protein is 1,4-alpha-glucan branching enzyme GlgB.